The sequence spans 444 residues: Argininosuccinate synthase (444 aa).

ATP contacts are provided by residues 18-26 (AFSGGLDTS) and Ala44. Tyr100 provides a ligand contact to L-citrulline. 2 residues coordinate ATP: Gly130 and Thr132. Residues Thr132, Asn136, and Asp137 each contribute to the L-aspartate site. Asn136 contributes to the L-citrulline binding site. Residue Asp137 coordinates ATP. 2 residues coordinate L-citrulline: Arg140 and Ser193. Asp195 serves as a coordination point for ATP. L-citrulline contacts are provided by Thr202, Glu204, and Glu281.

The protein belongs to the argininosuccinate synthase family. Type 2 subfamily. Homotetramer.

The protein localises to the cytoplasm. It carries out the reaction L-citrulline + L-aspartate + ATP = 2-(N(omega)-L-arginino)succinate + AMP + diphosphate + H(+). It participates in amino-acid biosynthesis; L-arginine biosynthesis; L-arginine from L-ornithine and carbamoyl phosphate: step 2/3. The sequence is that of Argininosuccinate synthase from Haemophilus influenzae (strain PittEE).